Here is a 322-residue protein sequence, read N- to C-terminus: Nodulation protein D 1 (322 aa).

In terms of domain architecture, HTH lysR-type spans 6-63; the sequence is LDLNLLVALDALMTERKLTAAARSINLSQPAMSAAITRLRTYFRDELFTMNGRELVPT. A DNA-binding region (H-T-H motif) is located at residues 23-42; sequence LTAAARSINLSQPAMSAAIT.

This sequence belongs to the LysR transcriptional regulatory family.

Regulates the expression of the nod abcFE genes which encode other nodulation proteins. NodD is also a negative regulator of its own expression. Binds flavonoids as inducers. The chain is Nodulation protein D 1 (nodD1) from Sinorhizobium fredii (strain NBRC 101917 / NGR234).